Here is a 582-residue protein sequence, read N- to C-terminus: Aspartate--tRNA ligase (582 aa).

Glu174 contributes to the L-aspartate binding site. Residues Gln198–Lys201 are aspartate. Arg220 is an L-aspartate binding site. ATP is bound by residues Arg220–Glu222 and Gln229. L-aspartate is bound at residue His443. Position 477 (Glu477) interacts with ATP. L-aspartate is bound at residue Arg484. Gly529 to Arg532 is a binding site for ATP.

The protein belongs to the class-II aminoacyl-tRNA synthetase family. Type 1 subfamily. Homodimer.

Its subcellular location is the cytoplasm. It catalyses the reaction tRNA(Asp) + L-aspartate + ATP = L-aspartyl-tRNA(Asp) + AMP + diphosphate. Functionally, catalyzes the attachment of L-aspartate to tRNA(Asp) in a two-step reaction: L-aspartate is first activated by ATP to form Asp-AMP and then transferred to the acceptor end of tRNA(Asp). The sequence is that of Aspartate--tRNA ligase from Streptococcus pyogenes serotype M28 (strain MGAS6180).